The primary structure comprises 180 residues: Adipocyte-related X-chromosome expressed sequence 1 (180 aa).

At 1 to 11 the chain is on the cytoplasmic side; the sequence is MNSLLSRANSL. The chain crosses the membrane as a helical; Signal-anchor for type II membrane protein span at residues 12 to 32; sequence FAFTLSVMAALTLGCILTTAF. Residues 33-180 lie on the Lumenal side of the membrane; sequence KDRSAPVRLH…PDSYEIATTF (148 aa). A glycan (N-linked (GlcNAc...) asparagine) is linked at Asn141.

The protein belongs to the SPCS3 family. As to expression, strongly expressed in epididymal white and brown adipose tissue with low levels in heart.

The protein localises to the endoplasmic reticulum membrane. Its function is as follows. Plays a role in adipogenesis. The protein is Adipocyte-related X-chromosome expressed sequence 1 of Mus musculus (Mouse).